Consider the following 291-residue polypeptide: Homeobox protein knotted-1-like 7 (291 aa).

The 21-residue stretch at 194–214 (ELKLELKQGFKSRIEDVREEI) folds into the ELK domain. A DNA-binding region (homeobox; TALE-type) is located at residues 215-278 (MRKRRAGKLP…NQRKRNWHNN (64 aa)).

It belongs to the TALE/KNOX homeobox family. As to quaternary structure, may form heterodimeric complex with the TALE/BELL proteins. Interacts with OFP1, OFP2, OFP3, OFP4 and OFP6.

It localises to the nucleus. Functionally, may be involved in secondary cell wall biosynthesis. This chain is Homeobox protein knotted-1-like 7 (KNAT7), found in Arabidopsis thaliana (Mouse-ear cress).